A 633-amino-acid polypeptide reads, in one-letter code: MTAPHETMSFQAEVKQLLHLMIHSLYSNKEIFLRELVSNASDATDKLRFEAIANPSLLENDADLAIRIEADAKARTLTITDNGIGMSRDEAIHNLGTIARSGTKEFFQQLSGDQQKDAALIGQFGVGFYSAFIVADKVTVETRRAGLGAEDAVRWESTGDGEFTIDAIARNERGTTITLHLREGEDDFLSAWRLKGIIQKYSDHISLPIRMPKEVWDAESSTYQRTAEWESVNQASALWTRAKSDITDEQYTAFYQHIAHDNEAPLAWTHNRVEGRSEYTQLLYIPARAPFDLWDRNHKAGLKLYVKRVFIMDDADQLLPGYLRWVKGVVDSADLPLNVSRELLQESRDVKAIREGCTKRVLSMLETLADSEEEAERAKYTTFWQQFGQALKEGIGEDQANLERVAKLLRFASTHNDTAEQNVALAAYVGRMKEGQDKIYYVTADTWSAAKNSPHLEVFRKKGIEVLLLTDRVDEWMLSFLREFDGKELVSVARGDLDLGKLADEAEKAEQEKAEADWKDVVDRAKTVLDGKAKDVRVTLRLTASASCLVSDEGDMSGYLQRLLKQAGQKAPDAQPILELNPEHALVQKLRDLPEGDAFSDRVQVLFDQALLAEGGMLDDPAAYVQRVNKLLA.

An a; substrate-binding region spans residues 1 to 341 (MTAPHETMSF…SADLPLNVSR (341 aa)). Residues 342-562 (ELLQESRDVK…EGDMSGYLQR (221 aa)) form a b region. Residues 563–633 (LLKQAGQKAP…YVQRVNKLLA (71 aa)) form a c region.

This sequence belongs to the heat shock protein 90 family. Homodimer.

It is found in the cytoplasm. Functionally, molecular chaperone. Has ATPase activity. In Cupriavidus necator (strain ATCC 17699 / DSM 428 / KCTC 22496 / NCIMB 10442 / H16 / Stanier 337) (Ralstonia eutropha), this protein is Chaperone protein HtpG.